Reading from the N-terminus, the 598-residue chain is ATP-dependent lipid A-core flippase (598 aa).

Over residues 1–15 the composition is skewed to polar residues; that stretch reads MSQAYQPDSTKTSAK. Residues 1 to 21 are disordered; sequence MSQAYQPDSTKTSAKTPVAPT. The next 4 membrane-spanning stretches (helical) occupy residues 44-64, 85-105, 172-192, and 269-289; these read WWAILLTIIGFAINAATEIWI, LFPFIIVMLFFVRGVGSFLGN, VVALMGFLLYSNWRLTLILFV, and INTPAVQLLMAMAMAVVVWLA. Residues 48-329 form the ABC transmembrane type-1 domain; that stretch reads LLTIIGFAIN…LTDVNQQLQR (282 aa). In terms of domain architecture, ABC transporter spans 360–595; that stretch reads IKLDNVSLVY…HGHYAQMYAR (236 aa). 393-400 is an ATP binding site; the sequence is GRSGAGKS.

This sequence belongs to the ABC transporter superfamily. Lipid exporter (TC 3.A.1.106) family. As to quaternary structure, homodimer.

The protein localises to the cell inner membrane. The enzyme catalyses ATP + H2O + lipid A-core oligosaccharideSide 1 = ADP + phosphate + lipid A-core oligosaccharideSide 2.. Involved in lipopolysaccharide (LPS) biosynthesis. Translocates lipid A-core from the inner to the outer leaflet of the inner membrane. Transmembrane domains (TMD) form a pore in the inner membrane and the ATP-binding domain (NBD) is responsible for energy generation. The polypeptide is ATP-dependent lipid A-core flippase (Psychrobacter cryohalolentis (strain ATCC BAA-1226 / DSM 17306 / VKM B-2378 / K5)).